Reading from the N-terminus, the 286-residue chain is Probable glucose uptake protein GlcU (286 aa).

The next 10 helical transmembrane spans lie at 4–22, 27–49, 53–72, 85–107, 111–133, 154–176, 181–198, 211–228, 233–255, and 267–284; these read IFLAILPAIFWGSIVLFNV, GPYSQTLGTTFGALIFSIVVYIF, VLTPTVIGVGVVSGLFWALG, VSRTMPISTGLQLVATTLFGVIV, WSTTISVVLGILALVCIIIGVIL, IVILLISTVGYLVYVVVIRLFNV, ALLPQAVGMVLGGILLTF, IIPGLIWAAGNMFLFISQ, VATSFSLSQMGIIISTLGGILIL, and IVVGIVFIIAAGIMLGIA.

It belongs to the GRP transporter (TC 2.A.7.5) family.

Its subcellular location is the cell membrane. In terms of biological role, involved in the uptake of glucose. The polypeptide is Probable glucose uptake protein GlcU (glcU) (Bacillus cereus (strain ATCC 14579 / DSM 31 / CCUG 7414 / JCM 2152 / NBRC 15305 / NCIMB 9373 / NCTC 2599 / NRRL B-3711)).